A 312-amino-acid polypeptide reads, in one-letter code: Transcriptional regulator protein Pur-beta (312 aa).

The interval 1–32 (MADGDSGSERGGGGGPCGFQPASRGGGEQETQ) is disordered. Alanine 2 carries the post-translational modification N-acetylalanine. 2 positions are modified to phosphoserine: serine 6 and serine 8. At arginine 24 the chain carries Omega-N-methylarginine. The interval 28–254 (EQETQELASK…LRVSEVKPSY (227 aa)) is DNA-binding. At threonine 31 the chain carries Phosphothreonine. Serine 101 carries the phosphoserine modification. At arginine 152 the chain carries Omega-N-methylarginine. Lysine 267 carries the post-translational modification N6-acetyllysine. Over residues 284-295 (ERQRDKLYERRG) the composition is skewed to basic and acidic residues. A disordered region spans residues 284–312 (ERQRDKLYERRGGGSGGGEESEGEEVDED). Arginine 294 carries the omega-N-methylarginine modification. Phosphoserine is present on residues serine 298 and serine 304. A compositionally biased stretch (acidic residues) spans 302 to 312 (EESEGEEVDED).

The protein belongs to the PUR DNA-binding protein family. As to quaternary structure, homodimer, heterodimer with PURA and heterotrimer with PURA and YBX1/Y-box protein 1. Interacts with MYOCD and SRF. In terms of tissue distribution, expressed in myocardium of heart failure patients.

Its subcellular location is the nucleus. Transcriptional regulator which can act as an activator or a repressor. Represses the transcription of ACTA2 in fibroblasts and smooth muscle cells via its ability to interact with the purine-rich strand of a MCAT- containing element in the 5' flanking region of the gene. Represses the transcription of MYOCD, capable of repressing all isoforms of MYOCD but the magnitude of the repressive effects is most notable for the SMC- specific isoforms. Promotes hepatic glucose production by activating the transcription of ADCY6, leading to cAMP accumulation, increased PKA activity, CREB activation, and increased transcription of PCK1 and G6PC genes. Has capacity to bind repeated elements in single-stranded DNA such as the purine-rich single strand of the PUR element located upstream of the MYC gene. Participates in transcriptional and translational regulation of alpha-MHC expression in cardiac myocytes by binding to the purine-rich negative regulatory (PNR) element Modulates constitutive liver galectin-3 gene transcription by binding to its promoter. May play a role in the dendritic transport of a subset of mRNAs. The protein is Transcriptional regulator protein Pur-beta (PURB) of Homo sapiens (Human).